The sequence spans 502 residues: Na(+)/H(+) antiporter NhaB (502 aa).

The next 11 membrane-spanning stretches (helical) occupy residues 27-49, 66-86, 95-115, 128-148, 149-169, 241-261, 299-318, 350-370, 394-414, 450-470, and 477-497; these read AFLV…VLIL, PGGL…ESVF, VILL…LLLY, IVLS…LDAL, TVTA…HQFA, FFLQ…VTCI, IAAL…SLAL, FEEA…VAVI, MFFI…VATV, ATPN…APLI, and MVLM…IAVY.

The protein belongs to the NhaB Na(+)/H(+) (TC 2.A.34) antiporter family.

It is found in the cell inner membrane. It catalyses the reaction 2 Na(+)(in) + 3 H(+)(out) = 2 Na(+)(out) + 3 H(+)(in). Its function is as follows. Na(+)/H(+) antiporter that extrudes sodium in exchange for external protons. The polypeptide is Na(+)/H(+) antiporter NhaB (Teredinibacter turnerae (strain ATCC 39867 / T7901)).